Consider the following 954-residue polypeptide: Protein teashirt (954 aa).

Disordered regions lie at residues 20–91 (LPTA…SLPS), 167–207 (ESAE…PQLG), and 276–331 (VKGG…GSGA). Residues 47 to 57 (HGGGAGSGGVG) are compositionally biased toward gly residues. Over residues 292–303 (SKATTPQAASQP) the composition is skewed to polar residues. Gly residues predominate over residues 318-328 (SGGGSGGGAAG). A C2H2-type 1 zinc finger spans residues 354-378 (FRCVWCKQSFPTLEALTTHMKDSKH). The interval 383–444 (VPPFGNLPSN…YRGDPPTPLP (62 aa)) is disordered. Residues 417–428 (SGSASNHSPSAN) show a composition bias toward low complexity. 2 consecutive C2H2-type zinc fingers follow at residues 466–490 (LKCM…ETQH) and 533–557 (LTCK…KNNH). Disordered regions lie at residues 563–622 (LQSA…DKND), 689–714 (FDTP…TSPV), and 748–935 (TSSE…NLTA). Positions 568–578 (ARKRPAPKKRE) are enriched in basic residues. A compositionally biased stretch (basic and acidic residues) spans 579 to 588 (KSLPVRKLLE). Low complexity predominate over residues 696-712 (ASLPASSPSNSSTKNTS). Phosphoserine occurs at positions 750 and 758. A compositionally biased stretch (basic and acidic residues) spans 778 to 807 (GHDEESSKPAIKQEREAESKPVKMEIKSEF). The segment covering 842-851 (PKTPSSAASP) has biased composition (low complexity). Polar residues-rich tracts occupy residues 862–885 (AESQ…GSSE) and 893–907 (DSLN…SLGS). Over residues 910 to 926 (AGANSRAKLAAAAAAGG) the composition is skewed to low complexity.

The protein belongs to the teashirt C2H2-type zinc-finger protein family. As to quaternary structure, binds arm. As to expression, shows a dynamic expression pattern during embryogenesis. Expressed in the embryonic trunk region (PS 3-13) with expression strongest in the thoracic segments. Expressed in a small group of cells corresponding to the anal tuft from stage 14. Strongly expressed in the embryonic ventral nerve cord. Also expressed in the proximal domain of the leg imaginal disk and in the region of the wing disk that will give rise to the proximal wing hinge. Expressed at high levels in the anterior and central embryonic midgut mesoderm and in the embryonic midgut endoderm. Expressed at a low level in more posterior visceral mesoderm of the gut. From stage 12 onwards, tsh and tio are colocalized in some cells of the CNS, trunk epidermis, hindgut and Malpighian tubules.

The protein resides in the nucleus. It is found in the cytoplasm. Its function is as follows. Homeotic protein that acts downstream of Arm in the Wg cascade during embryogenesis to determine segment identity throughout the entire trunk. Acts cooperatively with other trunk homeotic proteins to repress head homeotic genes and therefore repress head segmental identity. Necessary, in combination with Scr, for the formation of the prothoracic segment. Promotes eye development in the dorsal region of the eye disk and suppresses eye development in the ventral region in combination with Wg-signaling and several early dorso-ventral eye patterning genes. Required for proper development of proximal leg segments. Has differential functions along the dorso-ventral axs of the antennal and leg disks. May play a role in wing hinge development. Possible involvement in chromatin structure for modulation of transcription. Binds DNA and can act as both a transcriptional repressor and activator. Positively regulates its own expression as well as that of Dll. Negatively regulates the expression of mod. Required for Wg-mediated transcriptional repression of Ubx in the midgut. Also represses transcription of lab in the midgut and is necessary for the proper formation of anterior and central midgut structures. Tiptop (tio) and teashirt (tsh) have, on the whole, common activities. Tio and tsh repress each other's expression and tsh has a crucial role for trunk patterning that is in part masked by ectopic expression of tiptop. Both genes share a common activity required for the activation of Ser and svb and the maintenance of en and wg. This chain is Protein teashirt (tsh), found in Drosophila melanogaster (Fruit fly).